A 377-amino-acid chain; its full sequence is Carbamoyl phosphate synthase small chain (377 aa).

The interval 1–186 (MSTPALLVLA…LGKGFVTPDE (186 aa)) is CPSase. Residues S47, G238, and G240 each contribute to the L-glutamine site. Residues 190–377 (HVVAYDFGVK…IGNMKAAKRA (188 aa)) form the Glutamine amidotransferase type-1 domain. Catalysis depends on C266, which acts as the Nucleophile. L-glutamine contacts are provided by L267, Q270, N308, G310, and F311. Active-site residues include H350 and E352.

The protein belongs to the CarA family. As to quaternary structure, composed of two chains; the small (or glutamine) chain promotes the hydrolysis of glutamine to ammonia, which is used by the large (or ammonia) chain to synthesize carbamoyl phosphate. Tetramer of heterodimers (alpha,beta)4.

It catalyses the reaction hydrogencarbonate + L-glutamine + 2 ATP + H2O = carbamoyl phosphate + L-glutamate + 2 ADP + phosphate + 2 H(+). The enzyme catalyses L-glutamine + H2O = L-glutamate + NH4(+). Its pathway is amino-acid biosynthesis; L-arginine biosynthesis; carbamoyl phosphate from bicarbonate: step 1/1. It functions in the pathway pyrimidine metabolism; UMP biosynthesis via de novo pathway; (S)-dihydroorotate from bicarbonate: step 1/3. Functionally, small subunit of the glutamine-dependent carbamoyl phosphate synthetase (CPSase). CPSase catalyzes the formation of carbamoyl phosphate from the ammonia moiety of glutamine, carbonate, and phosphate donated by ATP, constituting the first step of 2 biosynthetic pathways, one leading to arginine and/or urea and the other to pyrimidine nucleotides. The small subunit (glutamine amidotransferase) binds and cleaves glutamine to supply the large subunit with the substrate ammonia. This is Carbamoyl phosphate synthase small chain from Neisseria meningitidis serogroup B (strain ATCC BAA-335 / MC58).